The sequence spans 621 residues: Chaperone protein HscA homolog (621 aa).

Belongs to the heat shock protein 70 family.

Functionally, chaperone involved in the maturation of iron-sulfur cluster-containing proteins. Has a low intrinsic ATPase activity which is markedly stimulated by HscB. In Ralstonia pickettii (strain 12J), this protein is Chaperone protein HscA homolog.